The following is a 520-amino-acid chain: Ribonuclease Y (520 aa).

A helical membrane pass occupies residues 5 to 25 (ITIISSLLFLIVGLVVGSLIF). Positions 76–127 (ELRGRRTETQKAENRLLQREENLDRKDTSLSKREATLERKEESISKRQQQIE) are disordered. Positions 210–273 (TVSVVTLPND…EIARIALEKL (64 aa)) constitute a KH domain. The HD domain maps to 336–429 (VLNHSLEVSK…VAAADALSAA (94 aa)).

This sequence belongs to the RNase Y family.

Its subcellular location is the cell membrane. Functionally, endoribonuclease that initiates mRNA decay. The chain is Ribonuclease Y from Listeria monocytogenes serotype 1/2a (strain 10403S).